We begin with the raw amino-acid sequence, 503 residues long: Aromatase (503 aa).

Helical transmembrane passes span 19–39 (EAMPAATMPVLLLTGLFLLVW) and 303–323 (MLIAAPDTMSVSLFFMLFLIA). D309 and M374 together coordinate substrate. Heme is bound at residue C437.

This sequence belongs to the cytochrome P450 family. It depends on heme as a cofactor. In terms of processing, phosphorylated in vitro by PKA and PKG/PRKG1. These phosphorylations inhibit the catalytic activity as measured by estrone synthesis from androstenedione (36% decrease for PKA and 30% for PKG/PRKG1). As to expression, widely expressed, including in adult and fetal brain, placenta, skin fibroblasts, adipose tissue and gonads.

The protein resides in the endoplasmic reticulum membrane. Its subcellular location is the microsome membrane. It carries out the reaction testosterone + 3 reduced [NADPH--hemoprotein reductase] + 3 O2 = 17beta-estradiol + formate + 3 oxidized [NADPH--hemoprotein reductase] + 4 H2O + 4 H(+). The enzyme catalyses androst-4-ene-3,17-dione + 3 reduced [NADPH--hemoprotein reductase] + 3 O2 = estrone + formate + 3 oxidized [NADPH--hemoprotein reductase] + 4 H2O + 4 H(+). The catalysed reaction is androst-4-ene-3,17-dione + reduced [NADPH--hemoprotein reductase] + O2 = 19-hydroxyandrost-4-ene-3,17-dione + oxidized [NADPH--hemoprotein reductase] + H2O + H(+). It catalyses the reaction 19-hydroxyandrost-4-ene-3,17-dione + reduced [NADPH--hemoprotein reductase] + O2 = 19-oxo-androst-4-ene-3,17-dione + oxidized [NADPH--hemoprotein reductase] + 2 H2O + H(+). It carries out the reaction 19-oxo-androst-4-ene-3,17-dione + reduced [NADPH--hemoprotein reductase] + O2 = estrone + formate + oxidized [NADPH--hemoprotein reductase] + H2O + 2 H(+). The enzyme catalyses estrone + reduced [NADPH--hemoprotein reductase] + O2 = 2-hydroxyestrone + oxidized [NADPH--hemoprotein reductase] + H2O + H(+). The catalysed reaction is 17beta-hydroxy-5alpha-androstan-3-one + reduced [NADPH--hemoprotein reductase] + O2 = 17beta,19-dihydroxy-3-oxo-5alpha-androstanone + oxidized [NADPH--hemoprotein reductase] + H2O + H(+). It catalyses the reaction 17beta,19-dihydroxy-3-oxo-5alpha-androstanone + reduced [NADPH--hemoprotein reductase] + O2 = 17beta-hydroxy-3,19-dioxo-5alpha-androstanone + oxidized [NADPH--hemoprotein reductase] + 2 H2O + H(+). It carries out the reaction 17beta-hydroxy-3,19-dioxo-5alpha-androstanone + reduced [NADPH--hemoprotein reductase] + O2 = 17beta-hydroxy-3-oxo-19-nor-5alpha-androst-1-ene + formate + oxidized [NADPH--hemoprotein reductase] + H2O + 2 H(+). Its pathway is steroid hormone biosynthesis. In terms of biological role, a cytochrome P450 monooxygenase that catalyzes the conversion of C19 androgens, androst-4-ene-3,17-dione (androstenedione) and testosterone to the C18 estrogens, estrone and estradiol, respectively. Catalyzes three successive oxidations of C19 androgens: two conventional oxidations at C19 yielding 19-hydroxy and 19-oxo/19-aldehyde derivatives, followed by a third oxidative aromatization step that involves C1-beta hydrogen abstraction combined with cleavage of the C10-C19 bond to yield a phenolic A ring and formic acid. Alternatively, the third oxidative reaction yields a 19-norsteroid and formic acid. Converts dihydrotestosterone to delta1,10-dehydro 19-nordihydrotestosterone and may play a role in homeostasis of this potent androgen. Also displays 2-hydroxylase activity toward estrone. Mechanistically, uses molecular oxygen inserting one oxygen atom into a substrate, and reducing the second into a water molecule, with two electrons provided by NADPH via cytochrome P450 reductase (CPR; NADPH-ferrihemoprotein reductase). The polypeptide is Aromatase (Homo sapiens (Human)).